Reading from the N-terminus, the 979-residue chain is Pro-apoptotic serine protease NMA111 (979 aa).

The span at 1–20 (MKRNGESHLNGEAKKSRTEQ) shows a compositional bias: basic and acidic residues. The segment at 1 to 43 (MKRNGESHLNGEAKKSRTEQNQEQQDYQDEYYSSSDEELLPSS) is disordered. The segment covering 21 to 34 (NQEQQDYQDEYYSS) has biased composition (low complexity). The segment at 65-260 (KVVNSVVSIQ…LPVSRPKRAL (196 aa)) is serine protease. Active-site charge relay system residues include His-108, Asp-139, and Ser-222. PDZ domains lie at 277–362 (EWQL…FVFQ) and 871–943 (PHYG…VSFD).

This sequence belongs to the peptidase S1C family.

Its subcellular location is the nucleus. Nuclear serine protease which mediates apoptosis. This is Pro-apoptotic serine protease NMA111 (NMA111) from Lodderomyces elongisporus (strain ATCC 11503 / CBS 2605 / JCM 1781 / NBRC 1676 / NRRL YB-4239) (Yeast).